The chain runs to 395 residues: Flap endonuclease 1 (395 aa).

The tract at residues 1–104 (MGIKHLFQVI…GELAKRTARK (104 aa)) is N-domain. Asp34 is a binding site for Mg(2+). 2 residues coordinate DNA: Arg47 and Arg70. Asp86 lines the Mg(2+) pocket. The segment at 102–121 (ARKAEATEAHEEAKETGTAE) is disordered. The segment at 122-253 (DVEKFSRRTV…NTALKLIREH (132 aa)) is I-domain. Residues Glu158, Glu160, Asp179, and Asp181 each contribute to the Mg(2+) site. Glu158 is a binding site for DNA. Residues Gly231 and Asp233 each contribute to the DNA site. Asp233 is a Mg(2+) binding site. An interaction with PCNA region spans residues 341–349 (QQSRLEGFF). The segment at 348-395 (FFKPVARTDEEKASLKRKHDEKLQEQKKRKKEEAKAKKEAKAKPRGAA) is disordered. Over residues 353-389 (ARTDEEKASLKRKHDEKLQEQKKRKKEEAKAKKEAKA) the composition is skewed to basic and acidic residues.

It belongs to the XPG/RAD2 endonuclease family. FEN1 subfamily. In terms of assembly, interacts with PCNA. Three molecules of fen1 bind to one PCNA trimer with each molecule binding to one PCNA monomer. PCNA stimulates the nuclease activity without altering cleavage specificity. Mg(2+) is required as a cofactor. Post-translationally, phosphorylated. Phosphorylation upon DNA damage induces relocalization to the nuclear plasma.

It is found in the nucleus. The protein resides in the nucleolus. The protein localises to the nucleoplasm. Its subcellular location is the mitochondrion. Structure-specific nuclease with 5'-flap endonuclease and 5'-3' exonuclease activities involved in DNA replication and repair. During DNA replication, cleaves the 5'-overhanging flap structure that is generated by displacement synthesis when DNA polymerase encounters the 5'-end of a downstream Okazaki fragment. It enters the flap from the 5'-end and then tracks to cleave the flap base, leaving a nick for ligation. Also involved in the long patch base excision repair (LP-BER) pathway, by cleaving within the apurinic/apyrimidinic (AP) site-terminated flap. Acts as a genome stabilization factor that prevents flaps from equilibrating into structures that lead to duplications and deletions. Also possesses 5'-3' exonuclease activity on nicked or gapped double-stranded DNA, and exhibits RNase H activity. Also involved in replication and repair of rDNA and in repairing mitochondrial DNA. This is Flap endonuclease 1 (fen1) from Neosartorya fischeri (strain ATCC 1020 / DSM 3700 / CBS 544.65 / FGSC A1164 / JCM 1740 / NRRL 181 / WB 181) (Aspergillus fischerianus).